A 257-amino-acid polypeptide reads, in one-letter code: uncharacterized protein (257 aa).

The chain crosses the membrane as a helical span at residues 7–27 (LMLGICLVLLIILIVGYVIMT).

This sequence belongs to the staphylococcal tandem lipoprotein family.

Its subcellular location is the cell membrane. This is an uncharacterized protein from Staphylococcus aureus (strain Mu50 / ATCC 700699).